The chain runs to 371 residues: MMEKRQPELCPGSPDAESGPGKREDAAIISRQNGCKEDEESKREEGDKEGGGRFKGDEETDDVPLQNSSNGTSISIIINGVTKETASHNALDLKREVPVIELSRRDAIKAVEQRTESHLVPITELRRPPQLPLPPQQRDDARMVQLSPNAFPVPARAMLYNLAQPLAAINSLGGESEQYSMYPSNRVKRRPAPYEVELDEAKIVRRIFTNSRERWRQQNVNGAFAELRKLIPTHPPDKKLSKNEILRLAMKYISFLSNLLEDQDGGRNVSSTTDGETGLMVGAHEVGPQGGPHQDRVVGLARDDIMETMSPGSSCGSLPDGDADGSPESFMEDQDSPPAPRTLTASRGPPLHLTTRDLRRNGRPLDGSSRR.

Positions 1–71 (MMEKRQPELC…DVPLQNSSNG (71 aa)) are disordered. The span at 34-57 (GCKEDEESKREEGDKEGGGRFKGD) shows a compositional bias: basic and acidic residues. Positions 204–256 (VRRIFTNSRERWRQQNVNGAFAELRKLIPTHPPDKKLSKNEILRLAMKYISFL) constitute a bHLH domain. Residues 263–371 (QDGGRNVSST…GRPLDGSSRR (109 aa)) are disordered. Residues 293 to 305 (HQDRVVGLARDDI) show a composition bias toward basic and acidic residues. The segment covering 321–335 (GDADGSPESFMEDQD) has biased composition (acidic residues).

In terms of tissue distribution, expressed in the main hemopoietic organs in adults, namely the kidney and the spleen. Also expressed in the liver, brain, gill and gonads.

The protein localises to the nucleus. In terms of biological role, transcription factor that plays a pivotal role in hemopoietic and endothelial development. This is T-cell acute lymphocytic leukemia protein 1 from Takifugu rubripes (Japanese pufferfish).